The chain runs to 585 residues: Arginine--tRNA ligase (585 aa).

Positions 131–141 (ANPTGPMHVGH) match the 'HIGH' region motif.

This sequence belongs to the class-I aminoacyl-tRNA synthetase family. Monomer.

Its subcellular location is the cytoplasm. It carries out the reaction tRNA(Arg) + L-arginine + ATP = L-arginyl-tRNA(Arg) + AMP + diphosphate. In Rhizobium leguminosarum bv. trifolii (strain WSM2304), this protein is Arginine--tRNA ligase.